A 194-amino-acid chain; its full sequence is Lymphocyte antigen 6 complex locus protein G5b (194 aa).

Residues 1-18 (MRARVLVGMLTMVGFAMG) form the signal peptide. The UPAR/Ly6 domain occupies 26–118 (RTCHLCLLED…SAQHQSTLRG (93 aa)). 5 disulfides stabilise this stretch: cysteine 28–cysteine 55, cysteine 31–cysteine 40, cysteine 47–cysteine 73, cysteine 81–cysteine 98, and cysteine 99–cysteine 104. N-linked (GlcNAc...) asparagine glycosylation is present at asparagine 63. Residue asparagine 141 is glycosylated (N-linked (GlcNAc...) asparagine).

Monomer. Post-translationally, N-glycosylated.

It is found in the secreted. This is Lymphocyte antigen 6 complex locus protein G5b (Ly6g5b) from Mus musculus (Mouse).